A 65-amino-acid chain; its full sequence is Putative antitoxin MJECL31 (65 aa).

It belongs to the UPF0165 family.

Possibly the antitoxin component of a type II toxin-antitoxin (TA) system. The chain is Putative antitoxin MJECL31 from Methanocaldococcus jannaschii (strain ATCC 43067 / DSM 2661 / JAL-1 / JCM 10045 / NBRC 100440) (Methanococcus jannaschii).